A 305-amino-acid polypeptide reads, in one-letter code: MLPRLGGPALPLLLPSLLLLLLLGAGGCGPGVRAEVLFRCPPCTPERLAACGPPPDAPCAELVREPGCGCCSVCARQEGEACGVYIPRCAQTLRCYPNPGSELPLKALVTGAGTCEKRRVGTTPQQVADSDDDHSEGGLVENHVDGTMNMLGGGSSAGRKPLKSGMKELAVFREKVNEQHRQMGKGAKHLSLEEPKKLRPPPARTPCQQELDQVLERISTMRLPDDRGPLEHLYSLHIPNCDKHGRYNLKQCKMSLNGQRGECWCVNPNTGKPIQGAPTIRGDPECHLFYNEQQETGGAHAQSVQ.

Residues 1 to 34 form the signal peptide; the sequence is MLPRLGGPALPLLLPSLLLLLLLGAGGCGPGVRA. Residues 36-118 enclose the IGFBP N-terminal domain; that stretch reads VLFRCPPCTP…VTGAGTCEKR (83 aa). Cystine bridges form between Cys-40–Cys-68, Cys-43–Cys-70, Cys-51–Cys-71, Cys-59–Cys-74, Cys-82–Cys-95, Cys-89–Cys-115, Cys-207–Cys-241, Cys-252–Cys-263, and Cys-265–Cys-286. The region spanning 204–286 is the Thyroglobulin type-1 domain; it reads RTPCQQELDQ…APTIRGDPEC (83 aa). The Cell attachment site signature appears at 281–283; it reads RGD.

As to quaternary structure, interacts with IGF1. Interacts with IGF2. Interacts (via RGD motif) with integrin alpha5/ITGA5; this interaction induces cell migration, adhesion or apoptosis according to the context. Interacts with PTPRB; this interaction leads to PTPRB dimerization and inactivation. In terms of processing, cleaved by MMP9 leading to release of free IGF2 from IGFBP2-IGF2 complex, which contributes to enhance the motility and the growth of astrocytes. Post-translationally, O-glycosylated. As to expression, highly expressed in adult liver, but also in kidney, lung, brain, spleen, testis and ovary.

It localises to the secreted. Functionally, multifunctional protein that plays a critical role in regulating the availability of IGFs such as IGF1 and IGF2 to their receptors and thereby regulates IGF-mediated cellular processes including proliferation, differentiation, and apoptosis in a cell-type specific manner. Functions coordinately with receptor protein tyrosine phosphatase beta/PTPRB and the IGF1 receptor to regulate IGF1-mediated signaling by stimulating the phosphorylation of PTEN leading to its inactivation and AKT1 activation. Plays a positive role in cell migration via interaction with integrin alpha5/ITGA5 through an RGD motif. Additionally, interaction with ITGA5/ITGB1 enhances the adhesion of endothelial progenitor cells to endothelial cells. Upon mitochondrial damage, facilitates apoptosis with ITGA5 of podocytes, and then activates the phosphorylation of focal adhesion kinase (FAK)-mediated mitochondrial injury. The polypeptide is Insulin-like growth factor-binding protein 2 (Igfbp2) (Mus musculus (Mouse)).